The sequence spans 279 residues: 2-dehydropantoate 2-reductase (279 aa).

NADP(+) contacts are provided by residues 6–11 (GLGAVG), Lys66, and Asn86. The active-site Proton donor is Lys158. Substrate is bound by residues Lys158, Asn162, Asn166, Asn176, and 225 to 228 (NLSS). Glu240 contacts NADP(+).

This sequence belongs to the ketopantoate reductase family.

Its subcellular location is the cytoplasm. The catalysed reaction is (R)-pantoate + NAD(+) = 2-dehydropantoate + NADH + H(+). It catalyses the reaction (R)-pantoate + NADP(+) = 2-dehydropantoate + NADPH + H(+). The protein operates within cofactor biosynthesis; coenzyme A biosynthesis. Catalyzes the NAD(P)H-dependent reduction of ketopantoate into pantoic acid. This chain is 2-dehydropantoate 2-reductase, found in Pyrobaculum aerophilum (strain ATCC 51768 / DSM 7523 / JCM 9630 / CIP 104966 / NBRC 100827 / IM2).